We begin with the raw amino-acid sequence, 463 residues long: Lipase 6 (463 aa).

The N-terminal stretch at 1–16 (MRDLILFLSLLHTIFA) is a signal peptide. Cys-112 and Cys-285 are joined by a disulfide. Ser-196 serves as the catalytic Charge relay system. An N-linked (GlcNAc...) asparagine glycan is attached at Asn-231. Catalysis depends on charge relay system residues Asp-348 and His-381. A disulfide bridge links Cys-364 with Cys-409. N-linked (GlcNAc...) asparagine glycosylation occurs at Asn-422.

The protein belongs to the AB hydrolase superfamily. Lipase family. Class Lip subfamily.

The protein localises to the secreted. The enzyme catalyses a triacylglycerol + H2O = a diacylglycerol + a fatty acid + H(+). Functionally, secreted lipase that is able to hydrolyze both the neutral triacylglycerols and the monopalmitate ester Tween 40, allowing the use of hydrolyzed products as carbon sources. Has broad lipolytic activity, which may be important for colonization and subsequent infection, therefore contributing to the persistence and virulence in human tissue. The sequence is that of Lipase 6 from Candida albicans (strain SC5314 / ATCC MYA-2876) (Yeast).